We begin with the raw amino-acid sequence, 35 residues long: Ranatuerin-2SPb (35 aa).

Cys-28 and Cys-33 form a disulfide bridge.

In terms of tissue distribution, expressed by the skin glands.

Its subcellular location is the secreted. Functionally, antibacterial activity against Gram-positive bacterium S.aureus. Shows no detectable hemolytic activity towards human erythrocytes. The sequence is that of Ranatuerin-2SPb from Lithobates septentrionalis (Mink frog).